The sequence spans 476 residues: MAVPFVEDWDLVQTLGEGAYGEVQLAVNRRTEEAVAVKIVDMKRAADCPENIKKEICINKMLNHENVVKFYGHRREGATQYLFLEYCSGGELFDRIEPDIGMPEPEAQRFFQQLIAGVVYLHSMGITHRDLKPENLLLDERDNLKISDFGLATVFKHNGRERLLNKMCGTLPYVAPELLRRPEFRAEPVDVWACGVVLTAMLAGELPWDQPSDSCQEYSDWKERKTYLAPWRKIDSAPLALLHKILTENPTARITIPDIKKDRWYCRPLKKGTKRGRVSSGGVTESPGALPKHIRSDTDFSPVKSALGEDKASYSTSQPEPGTGGALWDSSTGSIDRLVQGISFSQPACPEHMLLNSQLLGTPGSSQSPWQRLVRRMTRFFTKLDADGSYRSLRDVCEKMGYGWKQSCTNQVTISTTDRRNNKLIFKVNLLEMESRILVDFRLSKGDGLEFKRHFLKIKGKLSDVVSTQKVWLPPP.

Positions 9–265 constitute a Protein kinase domain; that stretch reads WDLVQTLGEG…IPDIKKDRWY (257 aa). Residues 15–23 and Lys38 each bind ATP; that span reads LGEGAYGEV. Asp130 serves as the catalytic Proton acceptor. Positions 272–329 are disordered; it reads GTKRGRVSSGGVTESPGALPKHIRSDTDFSPVKSALGEDKASYSTSQPEPGTGGALWD. A Phosphoserine; by PKB/AKT1 modification is found at Ser280. Ser296 is subject to Phosphoserine. Phosphoserine; by ATM and ATR is present on Ser317. Position 345 is a phosphoserine (Ser345). The tract at residues 391 to 476 is autoinhibitory region; that stretch reads RSLRDVCEKM…STQKVWLPPP (86 aa).

The protein belongs to the protein kinase superfamily. CAMK Ser/Thr protein kinase family. NIM1 subfamily. Phosphorylated by ATR in a RAD17-dependent manner in response to ultraviolet irradiation and inhibition of DNA replication. Phosphorylated by ATM in response to ionizing irradiation. Phosphorylation at Ser-345 induces a change in the conformation of the protein and activates the kinase activity. Phosphorylation at Ser-345 also increases binding to 14-3-3 proteins and promotes nuclear retention.

The protein localises to the nucleus. The protein resides in the chromosome. Its subcellular location is the cytoplasm. It is found in the cytoskeleton. It localises to the microtubule organizing center. The protein localises to the centrosome. It carries out the reaction L-seryl-[protein] + ATP = O-phospho-L-seryl-[protein] + ADP + H(+). The catalysed reaction is L-threonyl-[protein] + ATP = O-phospho-L-threonyl-[protein] + ADP + H(+). Its activity is regulated as follows. Activated through phosphorylation by atr or atm in response to DNA damage or inhibition of DNA replication. In terms of biological role, serine/threonine-protein kinase which is required for checkpoint-mediated cell cycle arrest and activation of DNA repair in response to the presence of DNA damage or unreplicated DNA. May also negatively regulate cell cycle progression during unperturbed cell cycles. This regulation is achieved by a number of mechanisms that together help to preserve the integrity of the genome. Recognizes the substrate consensus sequence [R-X-X-S/T]. Binds to and phosphorylates CDC25A, CDC25B and CDC25C. This inhibits their activity through proteasomal degradation, nucleo-cytoplasmic shuttling and inhibition by proteins of the 13-3-3 family. Inhibition of CDC25 leads to increased inhibitory tyrosine phosphorylation of CDK-cyclin complexes and blocks cell cycle progression. May promote DNA repair, regulate chromatin assembly and the transcription of genes that regulate cell-cycle progression. May also play a role in replication fork maintenance. The chain is Serine/threonine-protein kinase Chk1 (CHEK1) from Gallus gallus (Chicken).